Here is a 61-residue protein sequence, read N- to C-terminus: Potassium channel toxin alpha-KTx 6.9 (61 aa).

The N-terminal stretch at 1–23 (MNAKFILLLLVVTTTTLLPDAKG) is a signal peptide. 4 disulfide bridges follow: C29–C50, C35–C55, C39–C57, and C45–C60.

Belongs to the short scorpion toxin superfamily. Potassium channel inhibitor family. Alpha-KTx 06 subfamily. As to expression, expressed by the venom gland.

The protein localises to the secreted. Functionally, inhibits Kv1.2/KCNA2 and Kv1.3/KCNA3 voltage-gated potassium channels. The polypeptide is Potassium channel toxin alpha-KTx 6.9 (Opistophthalmus carinatus (African yellow leg scorpion)).